A 253-amino-acid chain; its full sequence is Isoprenyl transferase (253 aa).

D32 is an active-site residue. Position 32 (D32) interacts with Mg(2+). Substrate-binding positions include 33 to 36, W37, R45, H49, and 77 to 79; these read GNGR and STE. Catalysis depends on N80, which acts as the Proton acceptor. Residues W81, R83, R200, and 206 to 208 contribute to the substrate site; that span reads RLS. E219 is a Mg(2+) binding site.

Belongs to the UPP synthase family. As to quaternary structure, homodimer. Mg(2+) is required as a cofactor.

In terms of biological role, catalyzes the condensation of isopentenyl diphosphate (IPP) with allylic pyrophosphates generating different type of terpenoids. The sequence is that of Isoprenyl transferase from Clostridium perfringens (strain 13 / Type A).